The sequence spans 624 residues: MDLAQDIADDLMIDAAQEVRIRQDLVLTALGHRPADRALRVGRLLDVHSRTWSEDQEIVFKGRRIAWVGPAGSYRGEVRERVQRPDLAAVPGFGEVHKHIESSHLTPEWEAALVLPRGNTWTCEASHEFSNVNGARNLEFWFEARRRGSPLKIFPQPGSAVPPTAYEWGGGWYGGAEQASFMRESLMVTGLDEVMDWPAVWNPDNPSYERLWGMIGATFAARGVVEGHASGLRELPEINAFAAAGLASDHEVQTPEETWDKLTRGLFIELRIYAMPEIIGWLLKKGLQDWSQIAFTTDDRSASHTLALGASDHNARVAIEAGLAPEIAIQCLTINPARHMRLTPFVGSLAPGRFGDVVLLSDVGKLEIAEVWADGAQVSEGTRYLGDVPRIAWPDWATQTINIKREIKAEDFALPAAPGRTTMQAAVIRPFHWHPEFYTFELAVRDGAVQRDESQAITKFAIVDRFSGDGLVSKMFWKGCGPRTPETALACSVAHDKHNIWAVGSSDAAMAKAVNALVAQQGGWALVREGELAATVRFEVGGLMSCRRAEALDAEMQALYAEGRKVDWMYEPTFRPRWYPGFPERLMFATLTCAPWSWVLVAPCEQAPQGFINVQTGKTHPVVW.

The protein belongs to the metallo-dependent hydrolases superfamily. Adenine deaminase family. The cofactor is Mn(2+).

The enzyme catalyses adenine + H2O + H(+) = hypoxanthine + NH4(+). The chain is Adenine deaminase 1 from Bradyrhizobium sp. (strain ORS 278).